A 120-amino-acid chain; its full sequence is Succinate dehydrogenase assembly factor 3, mitochondrial (120 aa).

The N-terminal 36 residues, 1-36, are a transit peptide targeting the mitochondrion; the sequence is MSRILMSQLTHPQRVRLLYKTILRLHRGLPAELRAL.

This sequence belongs to the complex I LYR family. SDHAF3 subfamily. In terms of assembly, interacts with SdhB within an SdhA-SdhB subcomplex.

It is found in the mitochondrion matrix. Its function is as follows. Plays an essential role in the assembly of succinate dehydrogenase (SDH), an enzyme complex (also referred to as respiratory complex II) that is a component of both the tricarboxylic acid (TCA) cycle and the mitochondrial electron transport chain, and which couples the oxidation of succinate to fumarate with the reduction of ubiquinone (coenzyme Q) to ubiquinol. Promotes maturation of the iron-sulfur protein subunit SdhB of the SDH catalytic dimer, protecting it from the deleterious effects of oxidants. The polypeptide is Succinate dehydrogenase assembly factor 3, mitochondrial (Drosophila melanogaster (Fruit fly)).